Consider the following 68-residue polypeptide: Toxin Cg2 (68 aa).

The LCN-type CS-alpha/beta domain maps to 1-66 (KDGYLVNKST…VYPIPGKTCS (66 aa)). 4 disulfide bridges follow: cysteine 12/cysteine 65, cysteine 16/cysteine 41, cysteine 25/cysteine 46, and cysteine 29/cysteine 48.

It belongs to the long (4 C-C) scorpion toxin superfamily. Sodium channel inhibitor family. In terms of tissue distribution, expressed by the venom gland.

The protein localises to the secreted. Binds to sodium channels (Nav) and inhibits them. The sequence is that of Toxin Cg2 from Centruroides gracilis (Slenderbrown scorpion).